The primary structure comprises 207 residues: Thiamine-phosphate synthase (207 aa).

4-amino-2-methyl-5-(diphosphooxymethyl)pyrimidine contacts are provided by residues 35 to 39 and Asn67; that span reads QYRDK. Residues Asp68 and Asp86 each contribute to the Mg(2+) site. Thr105 provides a ligand contact to 4-amino-2-methyl-5-(diphosphooxymethyl)pyrimidine. 132–134 serves as a coordination point for 2-[(2R,5Z)-2-carboxy-4-methylthiazol-5(2H)-ylidene]ethyl phosphate; that stretch reads SNT. Lys135 provides a ligand contact to 4-amino-2-methyl-5-(diphosphooxymethyl)pyrimidine. A 2-[(2R,5Z)-2-carboxy-4-methylthiazol-5(2H)-ylidene]ethyl phosphate-binding site is contributed by Gly162.

The protein belongs to the thiamine-phosphate synthase family. Requires Mg(2+) as cofactor.

It catalyses the reaction 2-[(2R,5Z)-2-carboxy-4-methylthiazol-5(2H)-ylidene]ethyl phosphate + 4-amino-2-methyl-5-(diphosphooxymethyl)pyrimidine + 2 H(+) = thiamine phosphate + CO2 + diphosphate. The enzyme catalyses 2-(2-carboxy-4-methylthiazol-5-yl)ethyl phosphate + 4-amino-2-methyl-5-(diphosphooxymethyl)pyrimidine + 2 H(+) = thiamine phosphate + CO2 + diphosphate. It carries out the reaction 4-methyl-5-(2-phosphooxyethyl)-thiazole + 4-amino-2-methyl-5-(diphosphooxymethyl)pyrimidine + H(+) = thiamine phosphate + diphosphate. It functions in the pathway cofactor biosynthesis; thiamine diphosphate biosynthesis; thiamine phosphate from 4-amino-2-methyl-5-diphosphomethylpyrimidine and 4-methyl-5-(2-phosphoethyl)-thiazole: step 1/1. In terms of biological role, condenses 4-methyl-5-(beta-hydroxyethyl)thiazole monophosphate (THZ-P) and 2-methyl-4-amino-5-hydroxymethyl pyrimidine pyrophosphate (HMP-PP) to form thiamine monophosphate (TMP). This is Thiamine-phosphate synthase from Pseudomonas fluorescens (strain Pf0-1).